Here is a 123-residue protein sequence, read N- to C-terminus: Large ribosomal subunit protein bL21 (123 aa).

It belongs to the bacterial ribosomal protein bL21 family. As to quaternary structure, part of the 50S ribosomal subunit. Contacts protein L20.

In terms of biological role, this protein binds to 23S rRNA in the presence of protein L20. The chain is Large ribosomal subunit protein bL21 from Sinorhizobium fredii (strain NBRC 101917 / NGR234).